Reading from the N-terminus, the 657-residue chain is ABC1 family protein YPL109C, mitochondrial (657 aa).

The N-terminal 15 residues, 1 to 15, are a transit peptide targeting the mitochondrion; it reads MSFLKFAYRNSWRYY.

It belongs to the protein kinase superfamily. ADCK protein kinase family.

Its subcellular location is the mitochondrion. The chain is ABC1 family protein YPL109C, mitochondrial from Saccharomyces cerevisiae (strain ATCC 204508 / S288c) (Baker's yeast).